The chain runs to 350 residues: Outer membrane protein A (350 aa).

A signal peptide spans methionine 1–alanine 21. 8 beta stranded membrane-spanning segments follow: residues threonine 27–serine 37, glutamine 59–valine 70, leucine 74–tryptophan 82, glutamine 100–proline 111, leucine 116–glycine 124, proline 146–alanine 155, isoleucine 160–glutamine 167, and methionine 186–arginine 194. 4 repeat units span residues alanine 205–proline 206, alanine 207–proline 208, alanine 209–proline 210, and alanine 211–proline 212. Positions alanine 205 to proline 212 are 4 X 2 AA tandem repeats of A-P. The region spanning valine 214–lysine 342 is the OmpA-like domain. Cysteine 315 and cysteine 327 are oxidised to a cystine.

Belongs to the outer membrane OOP (TC 1.B.6) superfamily. OmpA family. Monomer and homodimer.

Its subcellular location is the cell outer membrane. With TolR probably plays a role in maintaining the position of the peptidoglycan cell wall in the periplasm. Acts as a porin with low permeability that allows slow penetration of small solutes; an internal gate slows down solute passage. Its function is as follows. Required for conjugation with F-type plasmids; probably serves as the mating receptor on recipient cells. The protein is Outer membrane protein A of Klebsiella aerogenes (Enterobacter aerogenes).